Reading from the N-terminus, the 203-residue chain is Holliday junction branch migration complex subunit RuvA (203 aa).

The tract at residues 1–64 (MIGRLRGIII…EDAQLLYGFN (64 aa)) is domain I. The domain II stretch occupies residues 65 to 142 (NKQERTLFKE…KGLHGDLFTP (78 aa)). Residues 143-154 (AADLVLTSPASP) are flexible linker. The domain III stretch occupies residues 155–203 (ATDDAEQEAVAALVALGYKPQEASRMVSKIARPDTSSETLIREALRAAL).

Belongs to the RuvA family. In terms of assembly, homotetramer. Forms an RuvA(8)-RuvB(12)-Holliday junction (HJ) complex. HJ DNA is sandwiched between 2 RuvA tetramers; dsDNA enters through RuvA and exits via RuvB. An RuvB hexamer assembles on each DNA strand where it exits the tetramer. Each RuvB hexamer is contacted by two RuvA subunits (via domain III) on 2 adjacent RuvB subunits; this complex drives branch migration. In the full resolvosome a probable DNA-RuvA(4)-RuvB(12)-RuvC(2) complex forms which resolves the HJ.

It localises to the cytoplasm. In terms of biological role, the RuvA-RuvB-RuvC complex processes Holliday junction (HJ) DNA during genetic recombination and DNA repair, while the RuvA-RuvB complex plays an important role in the rescue of blocked DNA replication forks via replication fork reversal (RFR). RuvA specifically binds to HJ cruciform DNA, conferring on it an open structure. The RuvB hexamer acts as an ATP-dependent pump, pulling dsDNA into and through the RuvAB complex. HJ branch migration allows RuvC to scan DNA until it finds its consensus sequence, where it cleaves and resolves the cruciform DNA. In Shigella flexneri serotype 5b (strain 8401), this protein is Holliday junction branch migration complex subunit RuvA.